We begin with the raw amino-acid sequence, 367 residues long: Pectate lyase 1 (367 aa).

The N-terminal stretch at 1–21 is a signal peptide; the sequence is MASPCLIAVLVFLCAIVSCYS. A disulfide bond links Cys28 and Cys45. Positions 38 to 305 are beta-helix; that stretch reads NRMKLADCAV…YKKEVTKRIG (268 aa). The igE-binding. Binds to IgE in 5 out of 7 patients tested stretch occupies residues 92-104; that stretch reads IFSQNMNIKLKMP. Cysteines 128 and 147 form a disulfide. A glycan (N-linked (GlcNAc...) asparagine) is linked at Asn148. Position 170 (Asp170) interacts with Ca(2+). N-linked (GlcNAc...) asparagine glycosylation is present at Asn178. Ca(2+) contacts are provided by Asp194 and Asp198. The igE-binding. Binds to IgE in 6 out of 7 patients tested stretch occupies residues 239–250; the sequence is AFNQFGPNAGQR. Residue Arg250 is part of the active site. The interval 251–258 is igE-binding. Binds to IgE in 5 out of 7 patients tested; it reads MPRARYGL. Cysteines 306 and 312 form a disulfide. An igE-binding. Binds to IgE in 3 out of 7 patients tested region spans residues 317–327; it reads WRSTRDAFING.

This sequence belongs to the polysaccharide lyase 1 family. Amb a subfamily. Requires Ca(2+) as cofactor. N-glycosylated; consists of complex-type N-glycans containing the Lewis a antigen (Galbeta1-3(Fucalpha1-4)GlcNAcbeta1-). Expressed in pollen (at protein level).

It carries out the reaction Eliminative cleavage of (1-&gt;4)-alpha-D-galacturonan to give oligosaccharides with 4-deoxy-alpha-D-galact-4-enuronosyl groups at their non-reducing ends.. Its pathway is glycan metabolism; pectin degradation; 2-dehydro-3-deoxy-D-gluconate from pectin: step 2/5. In terms of biological role, has low pectate lyase activity. The polypeptide is Pectate lyase 1 (Juniperus ashei (Ozark white cedar)).